Consider the following 295-residue polypeptide: Nucleotide-binding protein EF_0766 (295 aa).

ATP is bound at residue 12-19 (GMSGAGKT). A GTP-binding site is contributed by 62-65 (DLRS).

It belongs to the RapZ-like family.

Functionally, displays ATPase and GTPase activities. This Enterococcus faecalis (strain ATCC 700802 / V583) protein is Nucleotide-binding protein EF_0766.